The following is a 277-amino-acid chain: Glutamate racemase (277 aa).

Residues 25-26 (DS) and 57-58 (YG) contribute to the substrate site. Cys89 serves as the catalytic Proton donor/acceptor. Residue 90-91 (NT) coordinates substrate. The active-site Proton donor/acceptor is Cys204. 205-206 (TH) contacts substrate.

This sequence belongs to the aspartate/glutamate racemases family.

It carries out the reaction L-glutamate = D-glutamate. The protein operates within cell wall biogenesis; peptidoglycan biosynthesis. In terms of biological role, provides the (R)-glutamate required for cell wall biosynthesis. The polypeptide is Glutamate racemase (Brucella abortus (strain 2308)).